The primary structure comprises 172 residues: Keratin, high-sulfur matrix protein, B2A (172 aa).

Ala2 carries the N-acetylalanine modification. 5 consecutive repeats follow at residues 27 to 36, 37 to 46, 47 to 56, 57 to 66, and 67 to 76; these read PTCCQTSCCQ, PTSIQTSCCQ, PISIQTSCCQ, and PTCLQTSGCE.

In terms of biological role, the keratin products of mammalian epidermal derivatives such as wool and hair consist of microfibrils embedded in a rigid matrix of other proteins. The matrix proteins include the high-sulfur and high-tyrosine keratins, having molecular weights of 6-20 kDa, whereas the microfibrils contain the larger, low-sulfur keratins (40-56 kDa). This Ovis aries (Sheep) protein is Keratin, high-sulfur matrix protein, B2A.